A 522-amino-acid polypeptide reads, in one-letter code: Peptide chain release factor 3 (522 aa).

The tr-type G domain maps to 10 to 277; that stretch reads ASRKTFAIIS…TFVDFAPSPS (268 aa). Residues 19–26, 87–91, and 141–144 contribute to the GTP site; these read SHPDAGKT, DTPGH, and NKMD.

This sequence belongs to the TRAFAC class translation factor GTPase superfamily. Classic translation factor GTPase family. PrfC subfamily.

The protein resides in the cytoplasm. In terms of biological role, increases the formation of ribosomal termination complexes and stimulates activities of RF-1 and RF-2. It binds guanine nucleotides and has strong preference for UGA stop codons. It may interact directly with the ribosome. The stimulation of RF-1 and RF-2 is significantly reduced by GTP and GDP, but not by GMP. The polypeptide is Peptide chain release factor 3 (Listeria monocytogenes serotype 4b (strain CLIP80459)).